The following is a 410-amino-acid chain: Tryptophan synthase beta chain (410 aa).

K99 bears the N6-(pyridoxal phosphate)lysine mark.

It belongs to the TrpB family. As to quaternary structure, tetramer of two alpha and two beta chains. The cofactor is pyridoxal 5'-phosphate.

The catalysed reaction is (1S,2R)-1-C-(indol-3-yl)glycerol 3-phosphate + L-serine = D-glyceraldehyde 3-phosphate + L-tryptophan + H2O. The protein operates within amino-acid biosynthesis; L-tryptophan biosynthesis; L-tryptophan from chorismate: step 5/5. Functionally, the beta subunit is responsible for the synthesis of L-tryptophan from indole and L-serine. The sequence is that of Tryptophan synthase beta chain from Pseudomonas fluorescens (strain Pf0-1).